The sequence spans 324 residues: 3-hydroxyisobutyrate dehydrogenase, mitochondrial (324 aa).

Residues 1–25 (MSLRVMSPAMLNAWSQTLVRAMSTQ) constitute a mitochondrion transit peptide. NAD(+)-binding positions include 29–58 (KNIG…HVFD), 92–93 (LP), and T121. Residue K196 is part of the active site. K271 contacts NAD(+).

Belongs to the HIBADH-related family. 3-hydroxyisobutyrate dehydrogenase subfamily.

It is found in the mitochondrion. It carries out the reaction 3-hydroxy-2-methylpropanoate + NAD(+) = 2-methyl-3-oxopropanoate + NADH + H(+). It participates in amino-acid degradation; L-valine degradation. This is 3-hydroxyisobutyrate dehydrogenase, mitochondrial from Drosophila melanogaster (Fruit fly).